The sequence spans 407 residues: MGALTIVAKYMIVAQIEVNGGVDKSDIIGALFSQTEGLLGKDMDLRELQMMGRIGRIEVDIQEKDGKTKAKIYIPSNLDRYETALVAALIESIERVGPYPATVKVLEIRDLREEKRKKIVERAKELIKMIEEEILPDTKEIIEKLKEDVAKAEVVEYGPEKLPAGPDVDKSDWIIVVEGRADVVNLVKHGYRNVIALEGISRGVPQTIIDLSKRKSITLFIDGDKGGEMVLKELMKVAHIDYVARAPPGKEVEQLTAKEIAKALRNKVTLEEWLAQQKAGAEKTEAAAPPPQQPTAPPAAPSQQPIAEVPQEIVKRLGDMQGTLEAELYDTNWSLIKRIAVRELPDELANSTDSIYAILMDGIVTQRIVDLAAKKGVKIIITARVGPLTKVPEDLKIVTFEQLQKLA.

The 77-residue stretch at 172–248 folds into the Toprim domain; the sequence is DWIIVVEGRA…HIDYVARAPP (77 aa). Mg(2+)-binding residues include Glu-178, Asp-222, and Asp-224. The segment at 279–304 is disordered; sequence AGAEKTEAAAPPPQQPTAPPAAPSQQ. A compositionally biased stretch (pro residues) spans 288 to 300; it reads APPPQQPTAPPAA.

It belongs to the archaeal DnaG primase family. Forms a ternary complex with MCM helicase and DNA. Component of the archaeal exosome complex. Mg(2+) serves as cofactor.

It catalyses the reaction ssDNA + n NTP = ssDNA/pppN(pN)n-1 hybrid + (n-1) diphosphate.. Its function is as follows. RNA polymerase that catalyzes the synthesis of short RNA molecules used as primers for DNA polymerase during DNA replication. Also part of the exosome, which is a complex involved in RNA degradation. Acts as a poly(A)-binding protein that enhances the interaction between heteromeric, adenine-rich transcripts and the exosome. This Pyrobaculum calidifontis (strain DSM 21063 / JCM 11548 / VA1) protein is DNA primase DnaG.